A 134-amino-acid chain; its full sequence is Waprin-Phi1 (134 aa).

A signal peptide spans 1 to 23 (MTLRRGSCPLLLFSLVGLLTTCA). WAP domains lie at 36-82 (VAEK…SCQI) and 83-133 (PDEK…TTAR). 8 disulfides stabilise this stretch: Cys43–Cys72, Cys55–Cys76, Cys59–Cys71, Cys65–Cys80, Cys90–Cys120, Cys103–Cys124, Cys107–Cys119, and Cys113–Cys129.

This sequence belongs to the venom waprin family. In terms of tissue distribution, expressed by the venom gland.

The protein localises to the secreted. Damages membranes of susceptible bacteria. Has no hemolytic activity. Not toxic to mice. Does not inhibit the proteinases elastase and cathepsin G. The polypeptide is Waprin-Phi1 (Philodryas olfersii (Green snake)).